A 450-amino-acid polypeptide reads, in one-letter code: MTENEQIFWNRVLELAQSQLKQATYEFFVHDARLIKVDNHVATIFLDQMKELFWEKNLKDVILTAGFEVYNAQIAVDYVYEEDLIIEQQHQGQQGYTEQAFQQLPAVQSDLNPKYSFDNFIQGDENRWAVAASIAVANTPGTTYNPLFIWGGPGLGKTHLLNAIGNSVLLENPNARIKYITAENFINEFVVHIRLDTMDELKEKFRNLDLLLIDDIQSLAKKTLSGTQEEFFNTFNALHNNNKQIVLTSDRTPDHLNDLEDRLVTRFKWGLTVNITPPDFETRVAILTNKIQEYNFIFPQDTIEYLAGQFDSNVRDLEGALKDISLVANFKQIDTITVDIAAEAIRARKQDGPKMTVIPIEEIQAQVGKFYGVTVKEIKATKRTQDIVLARQVAMFLAREMTDNSLPKIGKEFGGRDHSTVLHAYNKIKNMIGQDESLRIEIETIKNKIK.

The interval Met-1–Leu-84 is domain I, interacts with DnaA modulators. Residues Leu-84–Ser-109 form a domain II region. Residues Asp-110 to Ala-328 are domain III, AAA+ region. The ATP site is built by Gly-154, Gly-156, Lys-157, and Thr-158. Residues Asn-329–Lys-450 are domain IV, binds dsDNA.

The protein belongs to the DnaA family. In terms of assembly, oligomerizes as a right-handed, spiral filament on DNA at oriC.

It localises to the cytoplasm. Plays an essential role in the initiation and regulation of chromosomal replication. ATP-DnaA binds to the origin of replication (oriC) to initiate formation of the DNA replication initiation complex once per cell cycle. Binds the DnaA box (a 9 base pair repeat at the origin) and separates the double-stranded (ds)DNA. Forms a right-handed helical filament on oriC DNA; dsDNA binds to the exterior of the filament while single-stranded (ss)DNA is stabiized in the filament's interior. The ATP-DnaA-oriC complex binds and stabilizes one strand of the AT-rich DNA unwinding element (DUE), permitting loading of DNA polymerase. After initiation quickly degrades to an ADP-DnaA complex that is not apt for DNA replication. Binds acidic phospholipids. In Streptococcus equi subsp. zooepidemicus (strain MGCS10565), this protein is Chromosomal replication initiator protein DnaA.